A 1224-amino-acid polypeptide reads, in one-letter code: Integrin alpha pat-2 (1224 aa).

Residues 1–27 form the signal peptide; the sequence is MREGSFPRRTRLLCLLAAVVLISTVTS. The Extracellular portion of the chain corresponds to 28 to 1153; sequence FNIDTKNVVL…ASEEGRDLPW (1126 aa). 7 FG-GAP repeats span residues 29-96, 110-173, 180-235, 236-292, 293-347, 364-423, and 427-490; these read NIDT…TCRE, NGSH…KTEE, EPAR…TDRP, NTEY…MMIN, LTDE…KPQY, GKQL…GVRE, and QKIE…PESA. Residues Asn-74, Asn-110, Asn-230, and Asn-292 are each glycosylated (N-linked (GlcNAc...) asparagine). N-linked (GlcNAc...) asparagine glycosylation occurs at Asn-610. The Cell attachment site signature appears at 622–624; the sequence is RGD. 3 N-linked (GlcNAc...) asparagine glycosylation sites follow: Asn-681, Asn-775, and Asn-819. 2 disordered regions span residues 898-968 and 981-1037; these read LRIT…QNTG and DYEY…KARF. Over residues 920–931 the composition is skewed to acidic residues; sequence REEDDESYEDET. Residues 955–964 show a composition bias toward basic and acidic residues; that stretch reads VYERDEDKIR. Residues 984 to 1003 show a composition bias toward acidic residues; sequence YIPDDQEYDGDDFEDDDEDF. Over residues 1008–1023 the composition is skewed to basic residues; that stretch reads SKRVKRAPVPKKKKKE. Residues 1024 to 1037 are compositionally biased toward basic and acidic residues; that stretch reads GSRSGEPRSDKARF. The chain crosses the membrane as a helical span at residues 1154 to 1174; the sequence is WLYLLAILIGLAILILLILLL. The Cytoplasmic portion of the chain corresponds to 1175 to 1224; it reads WRCGFFKRNRPPTEHAELRAEKQPAAHYADTQSRYAPQDQYSQGRHGQML. The interval 1190–1224 is disordered; that stretch reads AELRAEKQPAAHYADTQSRYAPQDQYSQGRHGQML. A compositionally biased stretch (polar residues) spans 1204-1224; it reads DTQSRYAPQDQYSQGRHGQML.

This sequence belongs to the integrin alpha chain family. As to quaternary structure, heterodimer of an alpha and a beta subunit. Alpha pat-2 associates with beta pat-3.

It localises to the membrane. Its function is as follows. Required for muscle development probably through the regulation of the actin-myosin cytoskeleton. During the formation of neuromuscular junctions at the larval stage, negatively regulates membrane protrusion from body wall muscles, probably through lamins such as epi-1, lam-2 and unc-52. Required for distal tip cell migration and dorsal pathfinding. Required for egg-laying. May play a role in cell motility and cell-cell interactions. This chain is Integrin alpha pat-2, found in Caenorhabditis briggsae.